The sequence spans 765 residues: DNA topoisomerase 1 (765 aa).

The span at Met-1 to Lys-23 shows a compositional bias: basic and acidic residues. A disordered region spans residues Met-1 to Glu-199. Ser-2 carries the post-translational modification N-acetylserine. A phosphoserine mark is found at Ser-2 and Ser-10. The segment covering His-24–Lys-39 has biased composition (basic residues). Positions Lys-40–Asn-108 are enriched in basic and acidic residues. Ser-57 is subject to Phosphoserine. Residue Lys-101 forms a Glycyl lysine isopeptide (Lys-Gly) (interchain with G-Cter in SUMO2) linkage. Residue Lys-103 forms a Glycyl lysine isopeptide (Lys-Gly) (interchain with G-Cter in SUMO); alternate linkage. Lys-103 is covalently cross-linked (Glycyl lysine isopeptide (Lys-Gly) (interchain with G-Cter in SUMO2); alternate). Position 112 is a phosphoserine (Ser-112). Lys-117 participates in a covalent cross-link: Glycyl lysine isopeptide (Lys-Gly) (interchain with G-Cter in SUMO); alternate. Lys-117 participates in a covalent cross-link: Glycyl lysine isopeptide (Lys-Gly) (interchain with G-Cter in SUMO2); alternate. A Glycyl lysine isopeptide (Lys-Gly) (interchain with G-Cter in SUMO1); alternate cross-link involves residue Lys-117. Over residues Pro-129 to Glu-166 the composition is skewed to basic and acidic residues. Residues Lys-134 and Lys-148 each participate in a glycyl lysine isopeptide (Lys-Gly) (interchain with G-Cter in SUMO2) cross-link. A Glycyl lysine isopeptide (Lys-Gly) (interchain with G-Cter in SUMO); alternate cross-link involves residue Lys-153. A Glycyl lysine isopeptide (Lys-Gly) (interchain with G-Cter in SUMO2); alternate cross-link involves residue Lys-153. Residues Lys-158 and Lys-164 each participate in a glycyl lysine isopeptide (Lys-Gly) (interchain with G-Cter in SUMO2) cross-link. Lys-172 participates in a covalent cross-link: Glycyl lysine isopeptide (Lys-Gly) (interchain with G-Cter in SUMO2); alternate. Lys-172 is modified (N6-acetyllysine; alternate). Positions Lys-179–Glu-199 are enriched in basic and acidic residues. Lys-204 is covalently cross-linked (Glycyl lysine isopeptide (Lys-Gly) (interchain with G-Cter in SUMO2)). N6-acetyllysine is present on Lys-280. Lys-336 is covalently cross-linked (Glycyl lysine isopeptide (Lys-Gly) (interchain with G-Cter in SUMO2)). 2 interaction with DNA regions span residues Lys-425–Tyr-426 and Arg-488–Lys-493. The region spanning Ser-432–Phe-765 is the Topo IB-type catalytic domain. The residue at position 506 (Ser-506) is a Phosphoserine; by CK2. Lys-549 participates in a covalent cross-link: Glycyl lysine isopeptide (Lys-Gly) (interchain with G-Cter in SUMO2). Residues Thr-585–Lys-587 are interaction with DNA. Residues Lys-642, Lys-700, and Lys-712 each participate in a glycyl lysine isopeptide (Lys-Gly) (interchain with G-Cter in SUMO2) cross-link. Tyr-723 (O-(3'-phospho-DNA)-tyrosine intermediate) is an active-site residue.

The protein belongs to the type IB topoisomerase family. In terms of assembly, monomer. Interacts with ERCC6. Interacts with TPRN; TPRN interacts with a number of DNA damage response proteins, is recruited to sites of DNA damage and may play a role in DNA damage repair. As to quaternary structure, (Microbial infection) Interacts with SV40 Large T antigen; this interactions allows viral DNA replication. Sumoylated. Lys-117 is the main site of sumoylation. Sumoylation plays a role in partitioning TOP1 between nucleoli and nucleoplasm. Levels are dramatically increased on camptothecin (CPT) treatment. In terms of processing, phosphorylation at Ser-506 by CK2 increases binding to supercoiled DNA and sensitivity to camptothecin. As to expression, endothelial cells.

The protein resides in the nucleus. Its subcellular location is the nucleolus. The protein localises to the nucleoplasm. The catalysed reaction is ATP-independent breakage of single-stranded DNA, followed by passage and rejoining.. Specifically inhibited by camptothecin (CPT), a plant alkaloid with antitumor activity. Its function is as follows. Releases the supercoiling and torsional tension of DNA introduced during the DNA replication and transcription by transiently cleaving and rejoining one strand of the DNA duplex. Introduces a single-strand break via transesterification at a target site in duplex DNA. The scissile phosphodiester is attacked by the catalytic tyrosine of the enzyme, resulting in the formation of a DNA-(3'-phosphotyrosyl)-enzyme intermediate and the expulsion of a 5'-OH DNA strand. The free DNA strand then rotates around the intact phosphodiester bond on the opposing strand, thus removing DNA supercoils. Finally, in the religation step, the DNA 5'-OH attacks the covalent intermediate to expel the active-site tyrosine and restore the DNA phosphodiester backbone. Regulates the alternative splicing of tissue factor (F3) pre-mRNA in endothelial cells. Involved in the circadian transcription of the core circadian clock component BMAL1 by altering the chromatin structure around the ROR response elements (ROREs) on the BMAL1 promoter. The protein is DNA topoisomerase 1 (TOP1) of Homo sapiens (Human).